The sequence spans 476 residues: Cytosolic iron-sulfur assembly component 3 (476 aa).

Ala2 bears the N-acetylalanine mark. [4Fe-4S] cluster-binding residues include Cys24, Cys71, Cys74, Cys77, Cys190, Cys246, Cys395, and Cys399.

This sequence belongs to the NARF family. As to quaternary structure, external component of the CIA complex. In the CIA complex, interacts directly with CIAO1 and MMS19.

In terms of biological role, component of the cytosolic iron-sulfur protein assembly (CIA) complex, a multiprotein complex that mediates the incorporation of iron-sulfur cluster into extramitochondrial Fe/S proteins. Seems to negatively regulate the level of HIF1A expression, although this effect could be indirect. The sequence is that of Cytosolic iron-sulfur assembly component 3 from Bos taurus (Bovine).